The chain runs to 81 residues: Photosystem I iron-sulfur center (81 aa).

2 4Fe-4S ferredoxin-type domains span residues 2 to 31 (SHSV…MVAW) and 39 to 68 (IASA…VRVY). Residues Cys11, Cys14, Cys17, Cys21, Cys48, Cys51, Cys54, and Cys58 each contribute to the [4Fe-4S] cluster site.

The eukaryotic PSI reaction center is composed of at least 11 subunits. [4Fe-4S] cluster serves as cofactor.

It localises to the plastid. The protein resides in the chloroplast thylakoid membrane. It carries out the reaction reduced [plastocyanin] + hnu + oxidized [2Fe-2S]-[ferredoxin] = oxidized [plastocyanin] + reduced [2Fe-2S]-[ferredoxin]. Its function is as follows. Apoprotein for the two 4Fe-4S centers FA and FB of photosystem I (PSI); essential for photochemical activity. FB is the terminal electron acceptor of PSI, donating electrons to ferredoxin. The C-terminus interacts with PsaA/B/D and helps assemble the protein into the PSI complex. Required for binding of PsaD and PsaE to PSI. PSI is a plastocyanin/cytochrome c6-ferredoxin oxidoreductase, converting photonic excitation into a charge separation, which transfers an electron from the donor P700 chlorophyll pair to the spectroscopically characterized acceptors A0, A1, FX, FA and FB in turn. The sequence is that of Photosystem I iron-sulfur center from Guillardia theta (Cryptophyte).